The chain runs to 217 residues: Large ribosomal subunit protein uL1 (217 aa).

The protein belongs to the universal ribosomal protein uL1 family.

This is Large ribosomal subunit protein uL1 (RPL10A) from Candida glabrata (strain ATCC 2001 / BCRC 20586 / JCM 3761 / NBRC 0622 / NRRL Y-65 / CBS 138) (Yeast).